Here is a 450-residue protein sequence, read N- to C-terminus: MSDSDGKNMEGRFEAAYIVDLVRLILERLSFVDFHRARCVSSTWYVASKSVIGVTNPTTPWIILFPNKNVENNGSCKLFDPHENKTYIIRDLGFDMSTSRCLASSGSWFLMFDHRADFHLLNLFTRERILLPSLESIDGERYMRFKRPISGSHIEIDKAVLWVDDKSRDYFVFCNLSSYVAYHHKRGDDNNSWKVLQPIKHQGCVDMVFKESKLYMISAHQCLTVFDFSGGVSPVEMECASFGSSVCVNRFHMKYFSNLAVTLSGEVLIIVGGKMDSSPEAKCVFTVNKMDPKSSEFTVLIKSIGDEALLLDLGITVPAKDGVMRDCIYFSNDQYHRCCGISLRDGYNADRICVYQIGSDYVVQEFEHLTTSSTKLFKDARWFFPTFGDKCCFHLWILHPVILQAKKLQKSNLKGTKPVTREKTTIVNNVDGTTTQREKTTKGKNMIGKK.

Residues 20–50 (DLVRLILERLSFVDFHRARCVSSTWYVASKS) enclose the F-box domain.

It localises to the cytoplasm. Its subcellular location is the nucleus. The protein localises to the nucleolus. Its function is as follows. Component of SCF(ASK-cullin-F-box) E3 ubiquitin ligase complexes, which may mediate the ubiquitination and subsequent proteasomal degradation of target proteins. Required for brassinosteroid (BR) signal transduction. Mediates ASK7/BIN2/SK21 inactivation both by competing with substrate binding (e.g. BZR1) and by promoting its ubiquitination and subsequent proteasomal degradation. This Arabidopsis thaliana (Mouse-ear cress) protein is F-box protein KIB3.